The following is an 88-amino-acid chain: LYR motif-containing protein 2 (88 aa).

A mitochondrion-targeting transit peptide spans 1 to 19; that stretch reads MAASRLPPAALTLKQFMRR.

The protein belongs to the complex I LYR family.

The protein localises to the mitochondrion. Involved in efficient integration of the N-module into mitochondrial respiratory chain complex I. The chain is LYR motif-containing protein 2 (Lyrm2) from Mus musculus (Mouse).